The primary structure comprises 264 residues: Rhamnosyltransferase WbbL (264 aa).

This sequence belongs to the glycosyltransferase 2 family.

It functions in the pathway bacterial outer membrane biogenesis; lipopolysaccharide biosynthesis. Functionally, rhamnosyltransferase involved in lipopolysaccharide biosynthesis. The chain is Rhamnosyltransferase WbbL (wbbL) from Escherichia coli (strain K12).